A 119-amino-acid polypeptide reads, in one-letter code: uncharacterized protein (119 aa).

The tract at residues 1–20 (MPHLAAEAHTWPPHISHSTL) is disordered. The helical transmembrane segment at 74–94 (LLFVVHQGHIGTGLIVFIICW) threads the bilayer.

The protein localises to the membrane. This is an uncharacterized protein from Saccharomyces cerevisiae (strain ATCC 204508 / S288c) (Baker's yeast).